The primary structure comprises 762 residues: Endonuclease MutS2 (762 aa).

Positions 1–22 are disordered; the sequence is MSDAPKRSLNPTLMMNNNNTPP. Over residues 9 to 20 the composition is skewed to low complexity; that stretch reads LNPTLMMNNNNT. 333–340 contributes to the ATP binding site; that stretch reads GVNAGGKT. Positions 688–762 constitute a Smr domain; it reads LDLRGQRSEE…GGSGVKIVKL (75 aa).

The protein belongs to the DNA mismatch repair MutS family. MutS2 subfamily. In terms of assembly, homodimer. Binds to stalled ribosomes, contacting rRNA.

Its activity is regulated as follows. ATPase activity is stimulated by DNA. Functionally, endonuclease that is involved in the suppression of homologous recombination and may thus have a key role in the control of bacterial genetic diversity. Also involved in repairing oxidative DNA damage. Has ATPase activity. Binds DNA. In terms of biological role, endonuclease that is involved in the suppression of homologous recombination and thus may have a key role in the control of bacterial genetic diversity. Its function is as follows. Acts as a ribosome collision sensor, splitting the ribosome into its 2 subunits. Detects stalled/collided 70S ribosomes which it binds and splits by an ATP-hydrolysis driven conformational change. Acts upstream of the ribosome quality control system (RQC), a ribosome-associated complex that mediates the extraction of incompletely synthesized nascent chains from stalled ribosomes and their subsequent degradation. Probably generates substrates for RQC. This is Endonuclease MutS2 from Helicobacter pylori (strain ATCC 700392 / 26695) (Campylobacter pylori).